The sequence spans 398 residues: tRNA N6-adenosine threonylcarbamoyltransferase (398 aa).

3 residues coordinate a divalent metal cation: His-162, His-166, and Tyr-183. Residues 183-187, Asp-215, Gly-230, Glu-234, and Asn-329 each bind substrate; that span reads YVSGG. Asp-357 provides a ligand contact to a divalent metal cation.

The protein belongs to the KAE1 / TsaD family. As to quaternary structure, component of the EKC/KEOPS complex composed of at least BUD32, CGI121, GON7, KAE1 and PCC1; the whole complex dimerizes. A divalent metal cation serves as cofactor.

It is found in the cytoplasm. Its subcellular location is the nucleus. It catalyses the reaction L-threonylcarbamoyladenylate + adenosine(37) in tRNA = N(6)-L-threonylcarbamoyladenosine(37) in tRNA + AMP + H(+). Its function is as follows. Component of the EKC/KEOPS complex that is required for the formation of a threonylcarbamoyl group on adenosine at position 37 (t(6)A37) in tRNAs that read codons beginning with adenine. The complex is probably involved in the transfer of the threonylcarbamoyl moiety of threonylcarbamoyl-AMP (TC-AMP) to the N6 group of A37. KAE1 likely plays a direct catalytic role in this reaction, but requires other protein(s) of the complex to fulfill this activity. The EKC/KEOPS complex also promotes both telomere uncapping and telomere elongation. The complex is required for efficient recruitment of transcriptional coactivators. This is tRNA N6-adenosine threonylcarbamoyltransferase from Cryptococcus neoformans var. neoformans serotype D (strain B-3501A) (Filobasidiella neoformans).